The sequence spans 208 residues: Small ribosomal subunit protein uS4 (208 aa).

In terms of domain architecture, S4 RNA-binding spans 98–159 (LRLDNVAYRL…AARTHIRIAA (62 aa)).

It belongs to the universal ribosomal protein uS4 family. In terms of assembly, part of the 30S ribosomal subunit. Contacts protein S5. The interaction surface between S4 and S5 is involved in control of translational fidelity.

Its function is as follows. One of the primary rRNA binding proteins, it binds directly to 16S rRNA where it nucleates assembly of the body of the 30S subunit. In terms of biological role, with S5 and S12 plays an important role in translational accuracy. The sequence is that of Small ribosomal subunit protein uS4 from Acidithiobacillus ferrooxidans (strain ATCC 23270 / DSM 14882 / CIP 104768 / NCIMB 8455) (Ferrobacillus ferrooxidans (strain ATCC 23270)).